A 393-amino-acid chain; its full sequence is Short chain dehydrogenase sirQ (393 aa).

L54 lines the NADP(+) pocket. The active-site Proton donor is S233. K259 functions as the Lowers pKa of active site Tyr in the catalytic mechanism. A286 contributes to the NADP(+) binding site.

This sequence belongs to the short-chain dehydrogenases/reductases (SDR) family. Highly divergent.

The protein operates within mycotoxin biosynthesis. Functionally, short chain dehydrogenase; part of the gene cluster that mediates the biosynthesis of sirodesmin PL, an epipolythiodioxopiperazine (ETP) characterized by a disulfide bridged cyclic dipeptide and that acts as a phytotoxin which is involved in the blackleg didease of canola. SirD catalyzes the O-prenylation of L-tyrosine (L-Tyr) in the presence of dimethylallyl diphosphate (DMAPP) to yield 4-O-dimethylallyl-L-Tyr, and therefore represents probably the first pathway-specific enzyme in the biosynthesis of sirodesmin PL. 4-O-dimethylallyl-L-Tyr, then undergoes condensation with L-Ser in a reaction catalyzed by the non-ribosomal peptide synthase sirP to form the diketopiperazine (DKP) backbone. Further bishydroxylation of the DKP performed by the cytochrome P450 monooxygenase sirC leads to the production of the intermediate phomamide. This step is essential to form the reactive thiol group required for toxicity of sirodesmin PL. The next steps of sirodesmin biosynthesis are not well understood yet, but some predictions could be made from intermediate compounds identification. Phomamide is converted into phomalizarine via oxidation, probably by sirT. Further oxidation, methylation (by sirM or sirN) and reduction steps convert phomalizarine to deacetyl sirodesmin. Finally, acetyltransferase sirH probably acetylates deacetyl sirodesmin to produce sirodesmin PL. The protein is Short chain dehydrogenase sirQ of Leptosphaeria maculans (Blackleg fungus).